The sequence spans 709 residues: Catalase HPII (709 aa).

Positions 1–26 (MSEQNNEQRSQAAGTDTVDRGNSNAK) are enriched in polar residues. The tract at residues 1-32 (MSEQNNEQRSQAAGTDTVDRGNSNAKLEQLEA) is disordered. Catalysis depends on residues His90 and Asn163. Tyr377 is a binding site for heme. The interval 419–443 (RASYEPNSIDGGWPKETPPAARNGG) is disordered.

Belongs to the catalase family. HPII subfamily. It depends on heme as a cofactor.

The protein localises to the cytoplasm. It catalyses the reaction 2 H2O2 = O2 + 2 H2O. Functionally, decomposes hydrogen peroxide into water and oxygen; serves to protect cells from the toxic effects of hydrogen peroxide. This Pseudomonas aeruginosa (strain ATCC 15692 / DSM 22644 / CIP 104116 / JCM 14847 / LMG 12228 / 1C / PRS 101 / PAO1) protein is Catalase HPII (katE).